We begin with the raw amino-acid sequence, 352 residues long: Protein RecA (352 aa).

66 to 73 (GPESSGKT) contributes to the ATP binding site.

This sequence belongs to the RecA family.

The protein resides in the cytoplasm. Its function is as follows. Can catalyze the hydrolysis of ATP in the presence of single-stranded DNA, the ATP-dependent uptake of single-stranded DNA by duplex DNA, and the ATP-dependent hybridization of homologous single-stranded DNAs. It interacts with LexA causing its activation and leading to its autocatalytic cleavage. This Psychrobacter arcticus (strain DSM 17307 / VKM B-2377 / 273-4) protein is Protein RecA.